A 124-amino-acid chain; its full sequence is Large ribosomal subunit protein bL12 (124 aa).

It belongs to the bacterial ribosomal protein bL12 family. As to quaternary structure, homodimer. Part of the ribosomal stalk of the 50S ribosomal subunit. Forms a multimeric L10(L12)X complex, where L10 forms an elongated spine to which 2 to 4 L12 dimers bind in a sequential fashion. Binds GTP-bound translation factors.

In terms of biological role, forms part of the ribosomal stalk which helps the ribosome interact with GTP-bound translation factors. Is thus essential for accurate translation. In Burkholderia thailandensis (strain ATCC 700388 / DSM 13276 / CCUG 48851 / CIP 106301 / E264), this protein is Large ribosomal subunit protein bL12.